The primary structure comprises 353 residues: tRNA pseudouridine synthase B (353 aa).

Asp-39 functions as the Nucleophile in the catalytic mechanism.

The protein belongs to the pseudouridine synthase TruB family. Type 1 subfamily.

The catalysed reaction is uridine(55) in tRNA = pseudouridine(55) in tRNA. In terms of biological role, responsible for synthesis of pseudouridine from uracil-55 in the psi GC loop of transfer RNAs. The protein is tRNA pseudouridine synthase B of Wolbachia pipientis subsp. Culex pipiens (strain wPip).